We begin with the raw amino-acid sequence, 260 residues long: Proansamycin X synthase (260 aa).

The active-site Acyl-thioester intermediate is Cys-73. Residues His-111 and Asp-126 contribute to the active site.

The protein belongs to the arylamine N-acetyltransferase family.

Its pathway is antibiotic biosynthesis; rifamycin B biosynthesis. Functionally, catalyzes the release of the completed linear polyketide from the rif PKS by forming an intramolecular amide bond, in this way terminating polyketide assembly and forming the macrocyclic compound proansamycin X, an intermediate in the rifamycin B biosynthesis. The polypeptide is Proansamycin X synthase (rifF) (Amycolatopsis mediterranei (strain S699) (Nocardia mediterranei)).